A 480-amino-acid chain; its full sequence is Adenosylhomocysteinase (480 aa).

Substrate contacts are provided by Thr-63, Asp-142, and Glu-203. Residue 204-206 participates in NAD(+) binding; the sequence is TTT. Substrate-binding residues include Lys-233 and Asp-237. Residues Asn-238, 267-272, Glu-290, Asn-325, 346-348, and Asn-394 contribute to the NAD(+) site; these read GYGDVG and IGH.

The protein belongs to the adenosylhomocysteinase family. It depends on NAD(+) as a cofactor.

It localises to the cytoplasm. It catalyses the reaction S-adenosyl-L-homocysteine + H2O = L-homocysteine + adenosine. Its pathway is amino-acid biosynthesis; L-homocysteine biosynthesis; L-homocysteine from S-adenosyl-L-homocysteine: step 1/1. May play a key role in the regulation of the intracellular concentration of adenosylhomocysteine. This chain is Adenosylhomocysteinase, found in Xylella fastidiosa (strain Temecula1 / ATCC 700964).